The chain runs to 112 residues: Thioredoxin-like protein YdfQ (112 aa).

One can recognise a Thioredoxin domain in the interval 1–107; sequence MKEMTGLHSL…LEQKLKRVYR (107 aa). A disulfide bridge links C32 with C35.

The polypeptide is Thioredoxin-like protein YdfQ (ydfQ) (Bacillus subtilis (strain 168)).